We begin with the raw amino-acid sequence, 687 residues long: Methionine--tRNA ligase (687 aa).

The short motif at Pro14 to His24 is the 'HIGH' region element. Zn(2+) is bound by residues Cys145, Cys148, Cys158, and Cys161. The 'KMSKS' region motif lies at Lys329–Ser333. Residue Lys332 coordinates ATP. One can recognise a tRNA-binding domain in the interval Asp585–Lys687.

It belongs to the class-I aminoacyl-tRNA synthetase family. MetG type 1 subfamily. In terms of assembly, homodimer. It depends on Zn(2+) as a cofactor.

The protein localises to the cytoplasm. It carries out the reaction tRNA(Met) + L-methionine + ATP = L-methionyl-tRNA(Met) + AMP + diphosphate. Is required not only for elongation of protein synthesis but also for the initiation of all mRNA translation through initiator tRNA(fMet) aminoacylation. The sequence is that of Methionine--tRNA ligase from Bdellovibrio bacteriovorus (strain ATCC 15356 / DSM 50701 / NCIMB 9529 / HD100).